The following is a 429-amino-acid chain: MKKFDKSIAAFEEAQNLMPGGVNSPVRAFKSVGMNPLFMERGKGSKVYDIDGNEYIDYVLSWGPLIHGHANDRVVEALKAVAEKGTSFGAPTEIENKLAQLVIERVPSIEIVRMVNSGTEATMSALRLARGYTGRNKILKFIGCYHGHGDSLLIKAGSGVATLGLPDSPGVPEGVAKNTITVAYNDLESVKYAFEQFGDDIACIIVEPVAGNMGVVPPQPGFLEGLREVTEQNGALLIFDEVMTGFRVAYNCGQGYYGVTPDLTCLGKVIGGGLPVGAYGGKAEIMRQVAPSGPIYQAGTLSGNPLAMTAGYETLVQLTPESYVEFERKAEMLEAGLRKAAEKHNIPHHINRAGSMIGIFFTDEQVINYDAAKSSNLEFFAAYYREMVEQGVFLPPSQFEGLFLSTAHSDADIEATIAAAEIAMSKLKA.

Lys-268 carries the post-translational modification N6-(pyridoxal phosphate)lysine.

Belongs to the class-III pyridoxal-phosphate-dependent aminotransferase family. HemL subfamily. In terms of assembly, homodimer. It depends on pyridoxal 5'-phosphate as a cofactor.

Its subcellular location is the cytoplasm. The catalysed reaction is (S)-4-amino-5-oxopentanoate = 5-aminolevulinate. Its pathway is porphyrin-containing compound metabolism; protoporphyrin-IX biosynthesis; 5-aminolevulinate from L-glutamyl-tRNA(Glu): step 2/2. In Bacillus mycoides (strain KBAB4) (Bacillus weihenstephanensis), this protein is Glutamate-1-semialdehyde 2,1-aminomutase 2.